A 396-amino-acid chain; its full sequence is MKRQNVRTLSLIACTFTYLLVGAAVFDALESDHEMREEEKLKAEEVRLRGKYNISSDDYQQLELVILQSEPHRAGVQWKFAGSFYFAITVITTIGYGHAAPGTDAGKAFCMFYAVLGIPLTLVMFQSLGERMNTFVRYLLKRIKKCCGMRNTEVSMENMVTVGFFSCMGTLCLGAAAFSQCEDWSFFHAYYYCFITLTTIGFGDFVALQSKGALQRKPFYVAFSFMYILVGLTVIGAFLNLVVLRFLTMNTDEDLLEGEVAQILAGNPRRVVVRVPQSRKRHHPMYFLRKYGRTLCYLCFPGANWGDDDDDDDDAVENVVVTTPVPPAVAAAAAAATPGPSTRNVRATVHSVSCRVEEIPPDVLRNTYFRSPFGAIPPGMHTCGENHRLHIRRKSI.

Residues 1 to 8 (MKRQNVRT) are Cytoplasmic-facing. A helical membrane pass occupies residues 9–29 (LSLIACTFTYLLVGAAVFDAL). Topologically, residues 30–88 (ESDHEMREEEKLKAEEVRLRGKYNISSDDYQQLELVILQSEPHRAGVQWKFAGSFYFAI) are extracellular. N53 is a glycosylation site (N-linked (GlcNAc...) asparagine). The segment at residues 89-101 (TVITTIGYGHAAP) is an intramembrane region (pore-forming). 4 residues coordinate K(+): T93, I94, G95, and Y96. Residues 93-98 (TIGYGH) are selectivity filter 1. The Extracellular portion of the chain corresponds to 102–107 (GTDAGK). Residues 108-128 (AFCMFYAVLGIPLTLVMFQSL) form a helical membrane-spanning segment. Over 129 to 158 (GERMNTFVRYLLKRIKKCCGMRNTEVSMEN) the chain is Cytoplasmic. The chain crosses the membrane as a helical span at residues 159-179 (MVTVGFFSCMGTLCLGAAAFS). At 180 to 194 (QCEDWSFFHAYYYCF) the chain is on the extracellular side. The segment at residues 195 to 207 (ITLTTIGFGDFVA) is an intramembrane region (pore-forming). Residues T199, I200, G201, and F202 each coordinate K(+). The interval 199-204 (TIGFGD) is selectivity filter 2. The Extracellular portion of the chain corresponds to 208–218 (LQSKGALQRKP). The helical transmembrane segment at 219 to 239 (FYVAFSFMYILVGLTVIGAFL) threads the bilayer. At 240 to 396 (NLVVLRFLTM…HRLHIRRKSI (157 aa)) the chain is on the cytoplasmic side. Positions 243 to 248 (VLRFLT) are X-gate.

It belongs to the two pore domain potassium channel (TC 1.A.1.8) family. In terms of assembly, homodimer. Heterodimer with KCNK1. Heterodimer with KCNK3. As to expression, highly expressed in the CNS and at lower levels in the colon, kidney, liver, lung, spleen, stomach and skeletal muscle. The highest expression was found in the olfactory nuclei, piriform cortex, cerebellum, antedorsal thalmic nucleus, pontine nucleus, dorsal raphe and several nuclei in the medulla. Shows a non-homogeneous distribution in the hippocampus. Expressed at highest levels in the lateral posterior and inferior portions and at medium levels in neocortex. Expressed in motoneurons, including hypoglossal motoneurons (at protein level).

Its subcellular location is the cell membrane. It is found in the mitochondrion inner membrane. The protein resides in the cell projection. The protein localises to the dendrite. It catalyses the reaction K(+)(in) = K(+)(out). The enzyme catalyses Na(+)(in) = Na(+)(out). Activated by halothane and isoflurane. Inhibited by external acidification, diacylglycerol, anandamide and AGT/angiotensin II. Ruthenium red inhibits homomeric but not KCNK3:KCNK9 heteromeric channels. Its function is as follows. K(+) channel that conducts voltage-dependent outward rectifying currents upon membrane depolarization. Voltage sensing is coupled to K(+) electrochemical gradient in an 'ion flux gating' mode where outward but not inward ion flow opens the gate. Changes ion selectivity and becomes permeable to Na(+) ions in response to extracellular acidification. Protonation of the pH sensor His-98 stabilizes C-type inactivation conformation likely converting the channel from outward K(+)-conducting, to inward Na(+)-conducting to nonconductive state. Homo- and heterodimerizes to form functional channels with distinct regulatory and gating properties. Allows K(+) currents with fast-gating kinetics important for the repolarization and hyperpolarization phases of action potentials. In granule neurons, hyperpolarizes the resting membrane potential to limit intrinsic neuronal excitability, but once the action potential threshold is reached, supports high-frequency action potential firing and increased neuronal excitability. Homomeric and/or heteromeric KCNK3:KCNK9 channels operate in cerebellar granule cells, whereas heteromeric KCNK1:KCNK9 enables currents in hippocampal dentate gyrus granule neurons. Dispensable for central chemosensory respiration i.e. breathing controlled by brainstem CO2/pH, it rather conducts pH-sensitive currents and controls the firing rate of serotonergic raphe neurons involved in potentiation of the respiratory chemoreflex. In retinal ganglion cells, mediates outward rectifying currents that regulate action potentials in response to acidification of the synaptic cleft. Involved in transmission of image-forming and nonimage-forming visual information in the retina. In adrenal gland, contributes to the maintenance of a hyperpolarized resting membrane potential of aldosterone-producing cells at zona glomerulosa and limits aldosterone release as part of a regulatory mechanism that controls arterial blood pressure and electrolyte homeostasis. This Rattus norvegicus (Rat) protein is Potassium channel subfamily K member 9.